A 327-amino-acid chain; its full sequence is Transcription factor bHLH71 (327 aa).

Disordered stretches follow at residues 46–88 (ISEI…NQRM) and 151–176 (AKLN…HQPS). The segment covering 65 to 76 (RGKKRRRRKPRV) has biased composition (basic residues). The span at 77–88 (CKNEEEAENQRM) shows a compositional bias: basic and acidic residues. Positions 85 to 136 (NQRMTHIAVERNRRRQMNQHLSVLRSLMPQPFAHKGDQASIVGGAIDFIKEL) constitute a bHLH domain. Polar residues predominate over residues 152 to 169 (KLNQSVTSSTSQDSNGEQ).

As to quaternary structure, homodimer. Interacts with FAMA. As to expression, expressed in leaves, stems, and flowers.

It is found in the nucleus. Transcription factor. May be involved in the differentiation of stomatal guard cells. This Arabidopsis thaliana (Mouse-ear cress) protein is Transcription factor bHLH71 (BHLH71).